A 47-amino-acid polypeptide reads, in one-letter code: MLRVRKRDGRLEEFSRAKIVRTCLRAGASKKIAEKVAEELKRGYTMG.

An ATP-cone domain is found at 2–47 (LRVRKRDGRLEEFSRAKIVRTCLRAGASKKIAEKVAEELKRGYTMG).

This is an uncharacterized protein from Archaeoglobus fulgidus (strain ATCC 49558 / DSM 4304 / JCM 9628 / NBRC 100126 / VC-16).